The primary structure comprises 39 residues: Non-specific lipid-transfer protein (39 aa).

Belongs to the plant LTP family.

Plant non-specific lipid-transfer proteins transfer phospholipids as well as galactolipids across membranes. May play a role in wax or cutin deposition in the cell walls of expanding epidermal cells and certain secretory tissues. This is Non-specific lipid-transfer protein from Musa acuminata (Banana).